Reading from the N-terminus, the 427-residue chain is 3-phosphoshikimate 1-carboxyvinyltransferase (427 aa).

3 residues coordinate 3-phosphoshikimate: Lys-20, Ser-21, and Arg-25. Residue Lys-20 coordinates phosphoenolpyruvate. Residues Gly-92 and Arg-120 each coordinate phosphoenolpyruvate. 4 residues coordinate 3-phosphoshikimate: Ser-166, Gln-168, Asp-312, and Lys-339. Position 168 (Gln-168) interacts with phosphoenolpyruvate. Residue Asp-312 is the Proton acceptor of the active site. Phosphoenolpyruvate-binding residues include Arg-343 and Arg-385.

It belongs to the EPSP synthase family. As to quaternary structure, monomer.

Its subcellular location is the cytoplasm. It carries out the reaction 3-phosphoshikimate + phosphoenolpyruvate = 5-O-(1-carboxyvinyl)-3-phosphoshikimate + phosphate. Its pathway is metabolic intermediate biosynthesis; chorismate biosynthesis; chorismate from D-erythrose 4-phosphate and phosphoenolpyruvate: step 6/7. In terms of biological role, catalyzes the transfer of the enolpyruvyl moiety of phosphoenolpyruvate (PEP) to the 5-hydroxyl of shikimate-3-phosphate (S3P) to produce enolpyruvyl shikimate-3-phosphate and inorganic phosphate. This chain is 3-phosphoshikimate 1-carboxyvinyltransferase, found in Streptococcus pyogenes serotype M28 (strain MGAS6180).